The chain runs to 1038 residues: Subtilisin-like protease SBT6.1 (1038 aa).

Residues 1–30 (MKVLGEASSYPYRSCIIVVFLSVSLFWLRP) form the signal peptide. A propeptide spans 31–181 (STYHPQQQNL…TTLNWSRHLL (151 aa)) (removed in mature form). N-linked (GlcNAc...) asparagine glycans are attached at residues Asn-44, Asn-52, Asn-171, and Asn-175. Residues 175–473 (NWSRHLLAQK…VDLLESYEIL (299 aa)) form the Peptidase S8 domain. Residues 182–1000 (AQKTQVTSMF…IDMPFLVPTR (819 aa)) lie on the Lumenal side of the membrane. Catalysis depends on Asp-212, which acts as the Charge relay system. An N-linked (GlcNAc...) asparagine glycan is attached at Asn-230. The active-site Charge relay system is the His-243. N-linked (GlcNAc...) asparagine glycosylation occurs at Asn-300. Ser-409 functions as the Charge relay system in the catalytic mechanism. N-linked (GlcNAc...) asparagine glycans are attached at residues Asn-513, Asn-579, Asn-902, and Asn-954. Residues 1001–1021 (WIVLAGVVASGVLVLLSIWRI) form a helical membrane-spanning segment. Topologically, residues 1022–1038 (RQKRGRRRRASGSNRLA) are cytoplasmic.

This sequence belongs to the peptidase S8 family. In terms of assembly, interacts with PME1 and PME5. In terms of tissue distribution, expressed in the vasculature of roots, cotyledons and leaves.

The protein resides in the golgi apparatus membrane. Serine protease that catalyzes the first step (site-1 cleavage) in the proteolytic activation of various factors, prior to site-2 cleavage. Part of a regulated intramembrane proteolysis (RIP) cascade. Cleaves BZIP17 and BZIP28 after the Arg-Arg-Ile-Leu (RRIL) motif. May cleave BZIP49 after the RRIL motif. Targets the membrane-associated BZIP17 factor, which functions as a stress sensor and transducer in a signaling pathway that resembles an ER stress response. Following salt stress, BZIP17 is cleaved by SBT6.1 (S1P) and S2P at the C-terminus and the N-terminal bZIP component is translocated to the nucleus, where it activates the expression of salt stress response genes. Cleaves the pectinesterases PME1 after the Arg-Arg-Leu-Met (RRLM) and Arg-Arg-Leu-Leu (RRLL) motifs, and PME5 after the Arg-Arg-Leu-Leu (RRLL) and Arg-Lys-Leu-Met (RKLM) motifs. This processing and C-terminus release occurs in the Golgi apparatus and is required for cell wall targeting of pectinesterases. Thus, SBT6.1 mediates the regulated release of mature pectinesterases from the Golgi. Cleaves the peptide growth factor RALF23 after the Arg-Arg-Ile-Leu (RRIL) motif. This processing is required for RALF23 function in the negative regulation of brassinolide (BL)-mediated signaling pathway (e.g. BL-induced hypocotyl elongation and branching limitation). The chain is Subtilisin-like protease SBT6.1 from Arabidopsis thaliana (Mouse-ear cress).